The primary structure comprises 200 residues: Pyridoxal 5'-phosphate synthase subunit PdxT (200 aa).

52–54 (GES) is an L-glutamine binding site. The Nucleophile role is filled by Cys-84. L-glutamine-binding positions include Arg-116 and 145–146 (IR). Catalysis depends on charge relay system residues His-181 and Glu-183.

Belongs to the glutaminase PdxT/SNO family. In the presence of PdxS, forms a dodecamer of heterodimers. Only shows activity in the heterodimer.

It carries out the reaction aldehydo-D-ribose 5-phosphate + D-glyceraldehyde 3-phosphate + L-glutamine = pyridoxal 5'-phosphate + L-glutamate + phosphate + 3 H2O + H(+). The catalysed reaction is L-glutamine + H2O = L-glutamate + NH4(+). It participates in cofactor biosynthesis; pyridoxal 5'-phosphate biosynthesis. Catalyzes the hydrolysis of glutamine to glutamate and ammonia as part of the biosynthesis of pyridoxal 5'-phosphate. The resulting ammonia molecule is channeled to the active site of PdxS. This Sulfolobus acidocaldarius (strain ATCC 33909 / DSM 639 / JCM 8929 / NBRC 15157 / NCIMB 11770) protein is Pyridoxal 5'-phosphate synthase subunit PdxT.